Reading from the N-terminus, the 699-residue chain is MNPIVKSFEYGQHTVTLETGVIARQADAAVLASMGDTTVLVTVVGKKEAEAGRDFFPLTVNYQEKTYAAGKIPGGFFKREGRPSEDETLIARLIDRPIRPLFPNGFKNEVQVIITVVSVDPQIEPDIISMIGTSAALAISGIPFSGPLGAARVGYINGEYVLNPTVAQIETSQLNLVVAGTASAVLMVESEAQALPEEVMLGSVVYGHDQQQVVINAIAEFKAEAGKPMWDWTAPVQDETLVAQIKELAEAGLGDAYKIQVKQDRYAQVAVVKAATKEALLASNPNIDLREVDNLLGSLEKKVVRGRIIRGEPRIDGREPDMIRALSVLAGVLPRTHGSALFTRGETQALVTCTLGTERDAQKIDSIMGERTNRFMLHYNFPPYSVGETGMVGSPKRREIGHGKLAWRGINAVMPSAEEFPYSVRVVSEITESNGSSSMASVCGTSLALMDAGVPIKTSVAGIAMGLVKEGDDFVVLSDILGDEDHLGDMDFKVAGTRGGITALQMDIKIEGITKEIMEIALQQAYGARVHILNVMDQAIGSHRDDISDHAPRITTIKINPEKIRDVIGKGGAVIRALTEETGTTIELEDDGTVRIASSNGEATKEAIRRIEEITSEVEVGRIYNGKVIRIVDFGAFVNILPGKDGLVHISQISDERVANVSDHLELNQEVAVKVMEVDRQGRVRLSIKEAQTKEAAAE.

Mg(2+)-binding residues include D485 and D491. The region spanning 552-611 is the KH domain; sequence PRITTIKINPEKIRDVIGKGGAVIRALTEETGTTIELEDDGTVRIASSNGEATKEAIRRI. In terms of domain architecture, S1 motif spans 621-689; it reads GRIYNGKVIR…RQGRVRLSIK (69 aa).

It belongs to the polyribonucleotide nucleotidyltransferase family. In terms of assembly, component of the RNA degradosome, which is a multiprotein complex involved in RNA processing and mRNA degradation. Mg(2+) serves as cofactor.

It localises to the cytoplasm. It catalyses the reaction RNA(n+1) + phosphate = RNA(n) + a ribonucleoside 5'-diphosphate. Involved in mRNA degradation. Catalyzes the phosphorolysis of single-stranded polyribonucleotides processively in the 3'- to 5'-direction. In Shewanella sp. (strain W3-18-1), this protein is Polyribonucleotide nucleotidyltransferase.